We begin with the raw amino-acid sequence, 396 residues long: Ribosomal RNA large subunit methyltransferase I (396 aa).

The 80-residue stretch at 2–81 (TVRLFLAKGR…EEINIEFFIR (80 aa)) folds into the PUA domain.

Belongs to the methyltransferase superfamily. RlmI family.

The protein localises to the cytoplasm. It catalyses the reaction cytidine(1962) in 23S rRNA + S-adenosyl-L-methionine = 5-methylcytidine(1962) in 23S rRNA + S-adenosyl-L-homocysteine + H(+). In terms of biological role, specifically methylates the cytosine at position 1962 (m5C1962) of 23S rRNA. This Serratia proteamaculans (strain 568) protein is Ribosomal RNA large subunit methyltransferase I.